The chain runs to 405 residues: Glucose-1-phosphate adenylyltransferase 1 (405 aa).

Alpha-D-glucose 1-phosphate is bound by residues tyrosine 96, glycine 161, 176 to 177 (EK), and serine 194.

This sequence belongs to the bacterial/plant glucose-1-phosphate adenylyltransferase family. Homotetramer.

The catalysed reaction is alpha-D-glucose 1-phosphate + ATP + H(+) = ADP-alpha-D-glucose + diphosphate. It participates in glycan biosynthesis; glycogen biosynthesis. Functionally, involved in the biosynthesis of ADP-glucose, a building block required for the elongation reactions to produce glycogen. Catalyzes the reaction between ATP and alpha-D-glucose 1-phosphate (G1P) to produce pyrophosphate and ADP-Glc. The polypeptide is Glucose-1-phosphate adenylyltransferase 1 (Vibrio parahaemolyticus serotype O3:K6 (strain RIMD 2210633)).